The chain runs to 323 residues: Cytochrome c biogenesis protein CcsA (323 aa).

8 helical membrane passes run 18–38 (VSVVITLHLITLLVNEIVGLY), 43–63 (KGMLVTFFCITGLLVTRWVYW), 71–91 (LYESLIFLSWSFYLIHMIPSF), 99–119 (LNVITAPSAIFTQGFATSGLL), 146–166 (LGYAALLGGSLLSVTLLIIIF), 227–247 (VISLGFIFLTIGILSGAVWAN), 256–276 (WDPKETWAFITWTIFAIYLHI), and 288–308 (AIVAFIGFLIIWICYFGVNLL).

The protein belongs to the CcmF/CycK/Ccl1/NrfE/CcsA family. As to quaternary structure, may interact with Ccs1.

The protein localises to the plastid. The protein resides in the chloroplast thylakoid membrane. In terms of biological role, required during biogenesis of c-type cytochromes (cytochrome c6 and cytochrome f) at the step of heme attachment. The chain is Cytochrome c biogenesis protein CcsA from Spinacia oleracea (Spinach).